Here is a 724-residue protein sequence, read N- to C-terminus: Protein arginine N-methyltransferase 1.6 (724 aa).

2 consecutive SAM-dependent MTase PRMT-type domains span residues 61-388 and 395-721; these read NDQP…YNLK and HERT…IVTH. Residues Glu183 and Glu192 contribute to the active site.

It belongs to the class I-like SAM-binding methyltransferase superfamily. Protein arginine N-methyltransferase family. PRMT7 subfamily.

Functionally, arginine methyltransferase that can both catalyze the formation of omega-N monomethylarginine (MMA) and symmetrical dimethylarginine (sDMA). In Arabidopsis thaliana (Mouse-ear cress), this protein is Protein arginine N-methyltransferase 1.6 (PRMT16).